The sequence spans 157 residues: Endoribonuclease YbeY (157 aa).

3 residues coordinate Zn(2+): H111, H115, and H121.

The protein belongs to the endoribonuclease YbeY family. The cofactor is Zn(2+).

It is found in the cytoplasm. Single strand-specific metallo-endoribonuclease involved in late-stage 70S ribosome quality control and in maturation of the 3' terminus of the 16S rRNA. The chain is Endoribonuclease YbeY from Pseudomonas putida (strain ATCC 47054 / DSM 6125 / CFBP 8728 / NCIMB 11950 / KT2440).